The sequence spans 399 residues: Argininosuccinate synthase (399 aa).

9–17 (AYSGGLDTS) contacts ATP. Tyr-85 is a binding site for L-citrulline. Gly-115 provides a ligand contact to ATP. L-aspartate is bound by residues Thr-117, Asn-121, and Asp-122. L-citrulline is bound at residue Asn-121. L-citrulline contacts are provided by Arg-125, Ser-173, Glu-258, and Tyr-270.

This sequence belongs to the argininosuccinate synthase family. Type 1 subfamily. In terms of assembly, homotetramer.

It localises to the cytoplasm. The enzyme catalyses L-citrulline + L-aspartate + ATP = 2-(N(omega)-L-arginino)succinate + AMP + diphosphate + H(+). The protein operates within amino-acid biosynthesis; L-arginine biosynthesis; L-arginine from L-ornithine and carbamoyl phosphate: step 2/3. This chain is Argininosuccinate synthase, found in Streptococcus gordonii (strain Challis / ATCC 35105 / BCRC 15272 / CH1 / DL1 / V288).